Here is a 291-residue protein sequence, read N- to C-terminus: Elongation factor Ts (291 aa).

Positions 79-82 are involved in Mg(2+) ion dislocation from EF-Tu; it reads TDFV.

This sequence belongs to the EF-Ts family.

It is found in the cytoplasm. In terms of biological role, associates with the EF-Tu.GDP complex and induces the exchange of GDP to GTP. It remains bound to the aminoacyl-tRNA.EF-Tu.GTP complex up to the GTP hydrolysis stage on the ribosome. The sequence is that of Elongation factor Ts from Roseobacter denitrificans (strain ATCC 33942 / OCh 114) (Erythrobacter sp. (strain OCh 114)).